We begin with the raw amino-acid sequence, 502 residues long: Probable RNA exonuclease C9B6.11c (502 aa).

Residues serine 338–lysine 379 are disordered. Residues glutamate 341–asparagine 351 show a composition bias toward basic and acidic residues. Over residues serine 363–threonine 376 the composition is skewed to low complexity.

It belongs to the CCR4/nocturin family.

Its subcellular location is the cytoplasm. It localises to the nucleus. This is Probable RNA exonuclease C9B6.11c from Schizosaccharomyces pombe (strain 972 / ATCC 24843) (Fission yeast).